The chain runs to 1025 residues: Beta-galactosidase (1025 aa).

The substrate site is built by Asn-105 and Asp-204. Asp-204 serves as a coordination point for Na(+). Residues Glu-417, His-419, and Glu-462 each coordinate Mg(2+). Residues Glu-462 and 538–541 contribute to the substrate site; that span reads EYAH. Glu-462 functions as the Proton donor in the catalytic mechanism. Glu-538 functions as the Nucleophile in the catalytic mechanism. Asn-598 provides a ligand contact to Mg(2+). Na(+) contacts are provided by Phe-602 and Asn-605. 2 residues coordinate substrate: Asn-605 and Trp-1003.

It belongs to the glycosyl hydrolase 2 family. In terms of assembly, homotetramer. Requires Mg(2+) as cofactor. Na(+) is required as a cofactor.

The catalysed reaction is Hydrolysis of terminal non-reducing beta-D-galactose residues in beta-D-galactosides.. The protein is Beta-galactosidase of Aeromonas hydrophila subsp. hydrophila (strain ATCC 7966 / DSM 30187 / BCRC 13018 / CCUG 14551 / JCM 1027 / KCTC 2358 / NCIMB 9240 / NCTC 8049).